The chain runs to 153 residues: MGKISSLPTQLFKCCFCDFLKVKMHITSSSHLFYLALCLLSFTSSATAGPETLCGAELVDALQFVCGDRGFYFNKPTGYGSSSRRAPQTGIVDECCFRSCDLRRLEMYCAPLKPAKSARSVRAQRHTDMPKAQKEVHLKNTSRGSSGNKNYRM.

Positions glycine 49–threonine 77 are b. 3 disulfide bridges follow: cysteine 54–cysteine 96, cysteine 66–cysteine 109, and cysteine 95–cysteine 100. The c stretch occupies residues glycine 78–threonine 89. Residues glycine 90 to alanine 110 are a. A d region spans residues proline 111–alanine 118. A propeptide spans arginine 119–methionine 153 (e peptide). The tract at residues serine 120–methionine 153 is disordered. Residues arginine 125 to leucine 138 are compositionally biased toward basic and acidic residues. Residues lysine 139–methionine 153 are compositionally biased toward polar residues.

The protein belongs to the insulin family. As to quaternary structure, forms a ternary complex with IGFR1 and ITGAV:ITGB3. Forms a ternary complex with IGFR1 and ITGA6:ITGB4. Forms a ternary complex with IGFBP3 and ALS.

The protein localises to the secreted. The insulin-like growth factors, isolated from plasma, are structurally and functionally related to insulin but have a much higher growth-promoting activity. May be a physiological regulator of [1-14C]-2-deoxy-D-glucose (2DG) transport and glycogen synthesis in osteoblasts. Stimulates glucose transport in bone-derived osteoblastic (PyMS) cells and is effective at much lower concentrations than insulin, not only regarding glycogen and DNA synthesis but also with regard to enhancing glucose uptake. May play a role in synapse maturation. Ca(2+)-dependent exocytosis of IGF1 is required for sensory perception of smell in the olfactory bulb. Acts as a ligand for IGF1R. Binds to the alpha subunit of IGF1R, leading to the activation of the intrinsic tyrosine kinase activity which autophosphorylates tyrosine residues in the beta subunit thus initiating a cascade of down-stream signaling events leading to activation of the PI3K-AKT/PKB and the Ras-MAPK pathways. Binds to integrins ITGAV:ITGB3 and ITGA6:ITGB4. Its binding to integrins and subsequent ternary complex formation with integrins and IGFR1 are essential for IGF1 signaling. Induces the phosphorylation and activation of IGFR1, MAPK3/ERK1, MAPK1/ERK2 and AKT1. As part of the MAPK/ERK signaling pathway, acts as a negative regulator of apoptosis in cardiomyocytes via promotion of STUB1/CHIP-mediated ubiquitination and degradation of ICER-type isoforms of CREM. This is Insulin-like growth factor 1 from Sus scrofa (Pig).